Consider the following 141-residue polypeptide: Large ribosomal subunit protein uL11 (141 aa).

Belongs to the universal ribosomal protein uL11 family. In terms of assembly, part of the ribosomal stalk of the 50S ribosomal subunit. Interacts with L10 and the large rRNA to form the base of the stalk. L10 forms an elongated spine to which L12 dimers bind in a sequential fashion forming a multimeric L10(L12)X complex. One or more lysine residues are methylated.

Functionally, forms part of the ribosomal stalk which helps the ribosome interact with GTP-bound translation factors. The polypeptide is Large ribosomal subunit protein uL11 (Clostridium perfringens (strain ATCC 13124 / DSM 756 / JCM 1290 / NCIMB 6125 / NCTC 8237 / Type A)).